Consider the following 842-residue polypeptide: Alanine--tRNA ligase (842 aa).

Residues H549, H553, C650, and H654 each coordinate Zn(2+).

This sequence belongs to the class-II aminoacyl-tRNA synthetase family. Requires Zn(2+) as cofactor.

The protein localises to the cytoplasm. The enzyme catalyses tRNA(Ala) + L-alanine + ATP = L-alanyl-tRNA(Ala) + AMP + diphosphate. Its function is as follows. Catalyzes the attachment of alanine to tRNA(Ala) in a two-step reaction: alanine is first activated by ATP to form Ala-AMP and then transferred to the acceptor end of tRNA(Ala). Also edits incorrectly charged Ser-tRNA(Ala) and Gly-tRNA(Ala) via its editing domain. The polypeptide is Alanine--tRNA ligase (Campylobacter jejuni subsp. jejuni serotype O:2 (strain ATCC 700819 / NCTC 11168)).